Here is a 433-residue protein sequence, read N- to C-terminus: Pyroglutamylated RF-amide peptide receptor (433 aa).

Residues 1–46 lie on the Extracellular side of the membrane; the sequence is MQALNITAEQFSRLLSAHNLTREQFIHRYGLRPLVYTPELPARAKL. N-linked (GlcNAc...) asparagine glycosylation is found at Asn-5 and Asn-19. A helical membrane pass occupies residues 47 to 67; it reads AFALAGALIFALALFGNSLVI. The Cytoplasmic portion of the chain corresponds to 68–81; that stretch reads YVVTRSKAMRTVTN. A helical transmembrane segment spans residues 82-102; it reads IFICSLALSDLLIAFFCIPVT. Over 103–120 the chain is Extracellular; it reads MLQNISDKWLGGAFICKM. Residues 121-141 traverse the membrane as a helical segment; it reads VPFVQSTAVVTEILTMTCIAV. The Cytoplasmic segment spans residues 142–162; sequence ERHQGLIHPFKMKWQYTTRRA. Residues 163 to 183 traverse the membrane as a helical segment; it reads FTILGVVWLAAIIVGSPMWHV. Topologically, residues 184–212 are extracellular; that stretch reads QRLEIKYDFLYEKEHVCCLEEWASPMHQR. A helical transmembrane segment spans residues 213 to 233; the sequence is IYTTFILVILFLLPLVVMLVL. Residues 234–271 are Cytoplasmic-facing; the sequence is YSKIGYELWIKKRVGDSSALQTIHGKEMSKIARKKKRA. The helical transmembrane segment at 272–292 threads the bilayer; it reads VVMMVTVVALFAACWAPFHVV. The Extracellular segment spans residues 293-313; it reads HMMVEYSNFEKEYDDVTIKMV. A helical membrane pass occupies residues 314–334; sequence FAVAQTIGFFNSICNPFVYAF. Over 335-433 the chain is Cytoplasmic; it reads MNENFKKNFL…NSTFGSGHEL (99 aa).

This sequence belongs to the G-protein coupled receptor 1 family. In terms of tissue distribution, expressed widely in the brain with high levels in the cortex and hypothalamus, and moderate levels in the brain stem, caudate nucleus, midbrain hippocampus, thalamus, trigeminal ganglia and spinal cord. Particularly strong expression detected in the mitral cell layer of the olfactory bulb, accessory olfactory bulb, island of Calleja and nucleus of the solitary tract. In peripheral tissues, expressed at moderate levels in the eye, liver, kidney, pituitary gland, testis and thymus.

It localises to the cell membrane. In terms of biological role, receptor for the orexigenic neuropeptide QRFP. The activity of this receptor is mediated by G proteins that modulate adenylate cyclase activity and intracellular calcium levels. This Mus musculus (Mouse) protein is Pyroglutamylated RF-amide peptide receptor (Qrfpr).